Reading from the N-terminus, the 138-residue chain is uncharacterized protein (138 aa).

This is an uncharacterized protein from Thiocystis violacea.